A 279-amino-acid chain; its full sequence is Acyl-coenzyme A thioesterase MBLAC2 (279 aa).

Ser2 carries the N-acetylserine modification. Zn(2+) contacts are provided by His83, His85, Asp87, His88, His170, Asp189, and His231. Cys254 is lipidated: S-palmitoyl cysteine.

This sequence belongs to the metallo-beta-lactamase superfamily. Glyoxalase II family. Zn(2+) serves as cofactor. Post-translationally, palmitoylated on Cys-254 by ZDHHC20.

It is found in the endoplasmic reticulum membrane. Its subcellular location is the cell membrane. The enzyme catalyses hexadecanoyl-CoA + H2O = hexadecanoate + CoA + H(+). It carries out the reaction dodecanoyl-CoA + H2O = dodecanoate + CoA + H(+). The catalysed reaction is tetradecanoyl-CoA + H2O = tetradecanoate + CoA + H(+). It catalyses the reaction octadecanoyl-CoA + H2O = octadecanoate + CoA + H(+). The enzyme catalyses a beta-lactam + H2O = a substituted beta-amino acid. Its function is as follows. Acyl-CoA thioesterases are a group of enzymes that catalyze the hydrolysis of acyl-CoAs to the free fatty acid and coenzyme A (CoASH), providing the potential to regulate intracellular levels of acyl-CoAs, free fatty acids and CoASH. Has an acyl-CoA thioesterase activity towards the long chain fatty acyl-CoA thioester palmitoyl-CoA (hexadecanoyl-CoA; C16:0-CoA). Displays a substrate preference for fatty acyl-CoAs with chain-lengths C12-C18. The sequence is that of Acyl-coenzyme A thioesterase MBLAC2 (MBLAC2) from Bos taurus (Bovine).